A 497-amino-acid chain; its full sequence is Bloodstream-specific protein 2 (497 aa).

The N-terminal stretch at 1–14 (MRAIFLVALALATM) is a signal peptide. Residues 15-124 (RESTAESLKL…IIKYIKANVG (110 aa)) form the Thioredoxin 1 domain. Asn30 is a glycosylation site (N-linked (GlcNAc...) asparagine). Cysteines 48 and 51 form a disulfide. Residues Asn63, Asn85, Asn153, Asn154, Asn250, and Asn278 are each glycosylated (N-linked (GlcNAc...) asparagine). In terms of domain architecture, Thioredoxin 2 spans 334 to 455 (EPTIKSLPVP…VYEFVRKHVT (122 aa)). Active-site nucleophile residues include Cys378 and Cys381. A disulfide bridge connects residues Cys378 and Cys381. N-linked (GlcNAc...) asparagine glycosylation is found at Asn413, Asn465, Asn476, Asn482, Asn485, and Asn488. Residues 461–497 (EKPANVTEEKKSEEENKSSKSNESNDSNESNVDKQDL) form a disordered region. The segment covering 467-480 (TEEKKSEEENKSSK) has biased composition (basic and acidic residues). Over residues 481 to 490 (SNESNDSNES) the composition is skewed to low complexity.

The protein belongs to the protein disulfide isomerase family.

The chain is Bloodstream-specific protein 2 (BS2) from Trypanosoma brucei brucei.